The sequence spans 248 residues: Ribosomal RNA small subunit methyltransferase J (248 aa).

S-adenosyl-L-methionine-binding positions include 101–102 (RD), 117–118 (ER), 153–154 (SS), and D171.

This sequence belongs to the methyltransferase superfamily. RsmJ family.

Its subcellular location is the cytoplasm. It carries out the reaction guanosine(1516) in 16S rRNA + S-adenosyl-L-methionine = N(2)-methylguanosine(1516) in 16S rRNA + S-adenosyl-L-homocysteine + H(+). Its function is as follows. Specifically methylates the guanosine in position 1516 of 16S rRNA. The polypeptide is Ribosomal RNA small subunit methyltransferase J (Pectobacterium atrosepticum (strain SCRI 1043 / ATCC BAA-672) (Erwinia carotovora subsp. atroseptica)).